The primary structure comprises 336 residues: Protein-glutamate methylesterase/protein-glutamine glutaminase 1 (336 aa).

The region spanning 2-119 (KIAIVNDMPL…GNPQEAAAPL (118 aa)) is the Response regulatory domain. The residue at position 53 (aspartate 53) is a 4-aspartylphosphate. In terms of domain architecture, CheB-type methylesterase spans 147–336 (TASRQRLVAI…APRLLEIFPK (190 aa)). Residues serine 159, histidine 186, and aspartate 279 contribute to the active site.

Belongs to the CheB family. In terms of processing, phosphorylated by CheA. Phosphorylation of the N-terminal regulatory domain activates the methylesterase activity.

It is found in the cytoplasm. The enzyme catalyses [protein]-L-glutamate 5-O-methyl ester + H2O = L-glutamyl-[protein] + methanol + H(+). It catalyses the reaction L-glutaminyl-[protein] + H2O = L-glutamyl-[protein] + NH4(+). Functionally, involved in chemotaxis. Part of a chemotaxis signal transduction system that modulates chemotaxis in response to various stimuli. Catalyzes the demethylation of specific methylglutamate residues introduced into the chemoreceptors (methyl-accepting chemotaxis proteins or MCP) by CheR. Also mediates the irreversible deamidation of specific glutamine residues to glutamic acid. The sequence is that of Protein-glutamate methylesterase/protein-glutamine glutaminase 1 from Pseudomonas fluorescens (strain Pf0-1).